The sequence spans 377 residues: Glutamate 5-kinase (377 aa).

K15 provides a ligand contact to ATP. Substrate is bound by residues S56, D143, and N155. 175-176 lines the ATP pocket; sequence SD. A PUA domain is found at 281–358; sequence KGTLTIDAGA…PDVLIILGIS (78 aa).

It belongs to the glutamate 5-kinase family.

The protein localises to the cytoplasm. The catalysed reaction is L-glutamate + ATP = L-glutamyl 5-phosphate + ADP. It participates in amino-acid biosynthesis; L-proline biosynthesis; L-glutamate 5-semialdehyde from L-glutamate: step 1/2. Its function is as follows. Catalyzes the transfer of a phosphate group to glutamate to form L-glutamate 5-phosphate. The protein is Glutamate 5-kinase of Rhodopseudomonas palustris (strain BisA53).